A 602-amino-acid polypeptide reads, in one-letter code: Aspartate--tRNA(Asp/Asn) ligase (602 aa).

An L-aspartate-binding site is contributed by Glu-175. An aspartate region spans residues 199–202 (QIFK). Arg-221 is a binding site for L-aspartate. Residues 221–223 (RDE) and Gln-230 each bind ATP. An L-aspartate-binding site is contributed by His-458. An ATP-binding site is contributed by Glu-492. Arg-499 lines the L-aspartate pocket. 544-547 (GLDR) contributes to the ATP binding site.

The protein belongs to the class-II aminoacyl-tRNA synthetase family. Type 1 subfamily. In terms of assembly, homodimer.

The protein localises to the cytoplasm. It carries out the reaction tRNA(Asx) + L-aspartate + ATP = L-aspartyl-tRNA(Asx) + AMP + diphosphate. In terms of biological role, aspartyl-tRNA synthetase with relaxed tRNA specificity since it is able to aspartylate not only its cognate tRNA(Asp) but also tRNA(Asn). Reaction proceeds in two steps: L-aspartate is first activated by ATP to form Asp-AMP and then transferred to the acceptor end of tRNA(Asp/Asn). The polypeptide is Aspartate--tRNA(Asp/Asn) ligase (Cupriavidus metallidurans (strain ATCC 43123 / DSM 2839 / NBRC 102507 / CH34) (Ralstonia metallidurans)).